The following is a 719-amino-acid chain: Aminodeoxychorismate synthase (719 aa).

The 195-residue stretch at 5–199 (RTLLIDNYDS…RDLSLRAAGH (195 aa)) folds into the Glutamine amidotransferase type-1 domain. C86 (nucleophile) is an active-site residue. Active-site residues include H173 and E175. The interval 199–224 (HRPPHTERIPAPAPAPAPAPAPAPPA) is disordered. Pro residues predominate over residues 209–224 (APAPAPAPAPAPAPPA).

It in the C-terminal section; belongs to the anthranilate synthase component I family.

The catalysed reaction is chorismate + L-glutamine = 4-amino-4-deoxychorismate + L-glutamate. The protein operates within antibiotic biosynthesis. Its function is as follows. Involved in pristinamycin I biosynthesis. Catalyzes the biosynthesis of 4-amino-4-deoxychorismate (ADC) from chorismate and glutamine. This chain is Aminodeoxychorismate synthase, found in Streptomyces pristinaespiralis.